Consider the following 175-residue polypeptide: Protein ppBat (175 aa).

Residues cysteine 74 and cysteine 111 each coordinate Zn(2+). Riboflavin is bound by residues asparagine 161 and tryptophan 164.

In terms of assembly, homodimer.

Its function is as follows. Binds flavin derivatives, such as lumichrome, riboflavin, FMN, and FAD. May act as a flavin storage protein. Appears to lack proteolytic or chaperone activities. The protein is Protein ppBat of Bacteroides thetaiotaomicron (strain ATCC 29148 / DSM 2079 / JCM 5827 / CCUG 10774 / NCTC 10582 / VPI-5482 / E50).